Reading from the N-terminus, the 121-residue chain is Small ribosomal subunit protein uS13 (121 aa).

The interval 94 to 121 (GLPMRGQRTRTNARTRKGPRKAAAALKK) is disordered.

It belongs to the universal ribosomal protein uS13 family. As to quaternary structure, part of the 30S ribosomal subunit. Forms a loose heterodimer with protein S19. Forms two bridges to the 50S subunit in the 70S ribosome.

Located at the top of the head of the 30S subunit, it contacts several helices of the 16S rRNA. In the 70S ribosome it contacts the 23S rRNA (bridge B1a) and protein L5 of the 50S subunit (bridge B1b), connecting the 2 subunits; these bridges are implicated in subunit movement. Contacts the tRNAs in the A and P-sites. In Polaromonas sp. (strain JS666 / ATCC BAA-500), this protein is Small ribosomal subunit protein uS13.